The primary structure comprises 677 residues: Secretogranin-1 (677 aa).

The N-terminal stretch at 1 to 20 (MQPAMLLGLLGAAALAAVSS) is a signal peptide. The cysteines at positions 36 and 57 are disulfide-linked. Disordered stretches follow at residues 63-505 (KSGK…RQYE) and 531-558 (NSDF…VTLT). The segment covering 64–90 (SGKEVKGEEKGENQNSKFEVRLLRDPA) has biased composition (basic and acidic residues). Phosphoserine is present on residues Ser-93, Ser-99, and Ser-100. Ser-93 is a glycosylation site (O-linked (Xyl...) (chondroitin sulfate) serine). Residue Thr-115 is glycosylated (O-linked (GalNAc...) threonine). The segment covering 118–133 (GNEKWTEGGGHSREGV) has biased composition (basic and acidic residues). Residues Ser-129, Ser-147, Ser-190, and Ser-220 each carry the phosphoserine modification. 2 stretches are compositionally biased toward basic and acidic residues: residues 148 to 192 (KEAK…DSGE) and 200 to 249 (KRSE…KPQE). Ser-237 carries an O-linked (Xyl...) (chondroitin sulfate) serine glycan. The span at 251 to 280 (TDQDQSQEESQEGEEGEEGEEGEEGEEDSA) shows a compositional bias: acidic residues. Phosphoserine occurs at positions 256, 260, 300, 301, 318, and 342. The segment covering 306 to 322 (PLSEERRPSPKESKEAD) has biased composition (basic and acidic residues). Sulfotyrosine is present on Tyr-348. 2 stretches are compositionally biased toward basic and acidic residues: residues 363 to 409 (RGSE…ERSY) and 421 to 455 (GREP…DTAK). 3 positions are modified to phosphoserine: Ser-365, Ser-375, and Ser-378. A Sulfotyrosine modification is found at Tyr-472. The segment covering 491 to 504 (EESREEVRFPDRQY) has biased composition (basic and acidic residues). Ser-493, Ser-532, and Ser-543 each carry phosphoserine. Sulfotyrosine is present on residues Tyr-566 and Tyr-624. Residues 622 to 646 (DFYDSEEQMGPHQEANDEKARADQR) are disordered. Phosphoserine is present on Ser-626. Over residues 635–646 (EANDEKARADQR) the composition is skewed to basic and acidic residues.

It belongs to the chromogranin/secretogranin protein family. Interacts with ITPR1 in the secretory granules.

It localises to the secreted. In terms of biological role, secretogranin-1 is a neuroendocrine secretory granule protein, which may be the precursor for other biologically active peptides. This Mus musculus (Mouse) protein is Secretogranin-1 (Chgb).